Reading from the N-terminus, the 548-residue chain is Chaperonin GroEL (548 aa).

Residues 30-33, lysine 51, 87-91, glycine 415, and aspartate 495 contribute to the ATP site; these read TLGP and DGTTT.

The protein belongs to the chaperonin (HSP60) family. As to quaternary structure, forms a cylinder of 14 subunits composed of two heptameric rings stacked back-to-back. Interacts with the co-chaperonin GroES.

The protein resides in the cytoplasm. It carries out the reaction ATP + H2O + a folded polypeptide = ADP + phosphate + an unfolded polypeptide.. Its function is as follows. Together with its co-chaperonin GroES, plays an essential role in assisting protein folding. The GroEL-GroES system forms a nano-cage that allows encapsulation of the non-native substrate proteins and provides a physical environment optimized to promote and accelerate protein folding. The protein is Chaperonin GroEL of Pseudoalteromonas atlantica (strain T6c / ATCC BAA-1087).